Consider the following 269-residue polypeptide: Hydroxyethylthiazole kinase (269 aa).

A substrate-binding site is contributed by methionine 46. Arginine 122 and threonine 168 together coordinate ATP. Position 195 (glycine 195) interacts with substrate.

The protein belongs to the Thz kinase family. It depends on Mg(2+) as a cofactor.

The enzyme catalyses 5-(2-hydroxyethyl)-4-methylthiazole + ATP = 4-methyl-5-(2-phosphooxyethyl)-thiazole + ADP + H(+). The protein operates within cofactor biosynthesis; thiamine diphosphate biosynthesis; 4-methyl-5-(2-phosphoethyl)-thiazole from 5-(2-hydroxyethyl)-4-methylthiazole: step 1/1. Its function is as follows. Catalyzes the phosphorylation of the hydroxyl group of 4-methyl-5-beta-hydroxyethylthiazole (THZ). This Chloroflexus aurantiacus (strain ATCC 29366 / DSM 635 / J-10-fl) protein is Hydroxyethylthiazole kinase.